Here is a 507-residue protein sequence, read N- to C-terminus: Aldehyde dehydrogenase 1, mitochondrial (507 aa).

A mitochondrion-targeting transit peptide spans 1–21 (MLATRNLVPIIRASIKWRIKL). 266-271 (GSTLVG) provides a ligand contact to NAD(+). Residues Glu289 and Cys323 contribute to the active site.

This sequence belongs to the aldehyde dehydrogenase family. As to quaternary structure, homotetramer.

It localises to the mitochondrion matrix. The enzyme catalyses an aldehyde + NAD(+) + H2O = a carboxylate + NADH + 2 H(+). It functions in the pathway alcohol metabolism; ethanol degradation; acetate from ethanol: step 2/2. The chain is Aldehyde dehydrogenase 1, mitochondrial (ALD1) from Saccharomyces cerevisiae (Baker's yeast).